The sequence spans 137 residues: MKRLEKISSIVPILLRITLNLALIMVGFTLVAFLIREAFTIFNNIFFLDTDVSYYYMTQDILTFFLYFEFIALIVKYFESHFHFPLRYFIYIGITAIIRFIIVDHSSATSTLILSGAILLLVAALFLANTKMLKREG.

Transmembrane regions (helical) follow at residues 13-35, 55-77, 84-103, and 107-129; these read ILLR…AFLI, YYMT…IVKY, FPLR…FIIV, and SATS…FLAN.

The protein belongs to the PsiE family.

The protein localises to the cell membrane. The chain is Protein PsiE homolog from Listeria monocytogenes serotype 4b (strain F2365).